The chain runs to 620 residues: DNA mismatch repair protein MutL (620 aa).

The disordered stretch occupies residues 353–375 (SRANGANDFTGRPFSGTERPRGG).

The protein belongs to the DNA mismatch repair MutL/HexB family.

This protein is involved in the repair of mismatches in DNA. It is required for dam-dependent methyl-directed DNA mismatch repair. May act as a 'molecular matchmaker', a protein that promotes the formation of a stable complex between two or more DNA-binding proteins in an ATP-dependent manner without itself being part of a final effector complex. The protein is DNA mismatch repair protein MutL of Chelativorans sp. (strain BNC1).